Reading from the N-terminus, the 466-residue chain is cGMP-specific 3',5'-cGMP phosphodiesterase 3 (466 aa).

Low complexity predominate over residues Met-1–Asn-120. The disordered stretch occupies residues Met-1–Asp-150. Residues Asp-123–Asn-134 are compositionally biased toward acidic residues. The segment covering Asn-135–Asp-150 has biased composition (low complexity). One can recognise a PDEase domain in the interval Asn-137 to Ser-458. Catalysis depends on His-213, which acts as the Proton donor. A divalent metal cation contacts are provided by His-217, His-253, Asp-254, and Asp-364.

The protein belongs to the cyclic nucleotide phosphodiesterase family. Requires a divalent metal cation as cofactor.

It localises to the cytoplasm. Its subcellular location is the cytosol. It catalyses the reaction 3',5'-cyclic GMP + H2O = GMP + H(+). Its activity is regulated as follows. Inhibited by 3-isobutyl-1-methylxanthine (IBMX). Phosphodiesterase specific for cGMP, which is not activated by cGMP. Involved in the degradation of intracellular cGMP. The sequence is that of cGMP-specific 3',5'-cGMP phosphodiesterase 3 (pde3) from Dictyostelium discoideum (Social amoeba).